A 286-amino-acid chain; its full sequence is Polygalacturonan/rhamnogalacturonan transport system permease protein YtcP (286 aa).

6 helical membrane-spanning segments follow: residues 9 to 29 (LIYGFLLMFALICVLPFIHVI), 69 to 89 (LLVSVFVTVIGTAVSMFLSSL), 106 to 126 (MFLVVFTMLFSGGMIPTFLVV), 131 to 151 (LLDSYWALILPTAINAFNLII), 176 to 196 (GIFFKIVLPLSLPAIATISLF), and 251 to 271 (TIKMAVIVVATIPVLLVYPFI). Residues 69–271 (LLVSVFVTVI…IPVLLVYPFI (203 aa)) enclose the ABC transmembrane type-1 domain.

It belongs to the binding-protein-dependent transport system permease family. CysTW subfamily. In terms of assembly, the complex is probably composed of two ATP-binding proteins (MsmX), two transmembrane proteins (YtcP and YteP) and a solute-binding protein (YtcQ).

It is found in the cell membrane. Functionally, involved in pectin degradation. Part of the ABC transporter complex YtcQP-YteP involved in the uptake of polygalacturonan and rhamnogalacturonan type I. Responsible for the translocation of the substrate across the membrane. This chain is Polygalacturonan/rhamnogalacturonan transport system permease protein YtcP (ytcP), found in Bacillus subtilis (strain 168).